We begin with the raw amino-acid sequence, 375 residues long: E3 ubiquitin-protein ligase RHF2A (375 aa).

The RING-type; atypical zinc finger occupies 33–74; the sequence is CSICLESFCESDPSTLTSCKHEYHLQCILEWCQRSSQCPMCW. The span at 146–159 shows a compositional bias: basic residues; the sequence is RARHGVRREGHRSR. Disordered regions lie at residues 146–165, 172–262, and 318–375; these read RARH…SQGH, SSQP…SESL, and ERLE…SGSS. A compositionally biased stretch (pro residues) spans 178-188; sequence SSPPPHPPMPS. 2 stretches are compositionally biased toward polar residues: residues 211-245 and 327-336; these read SHQS…SSPS and RPSTASVSDV. The span at 337-365 shows a compositional bias: basic and acidic residues; it reads SENHTPETNNEHNRAAAGDEHSVNERGVK.

The enzyme catalyses S-ubiquitinyl-[E2 ubiquitin-conjugating enzyme]-L-cysteine + [acceptor protein]-L-lysine = [E2 ubiquitin-conjugating enzyme]-L-cysteine + N(6)-ubiquitinyl-[acceptor protein]-L-lysine.. It functions in the pathway protein modification; protein ubiquitination. Its function is as follows. E3 ubiquitin-protein ligase involved in the positive regulation of the gametogenesis progression. Required for the degradation of KRP6, a cyclin-dependent kinase inhibitor which accumulates during meiosis and blocks the progression of subsequent mitoses during gametophytes development. Functions in association with RHF1A. The sequence is that of E3 ubiquitin-protein ligase RHF2A from Arabidopsis thaliana (Mouse-ear cress).